The following is a 184-amino-acid chain: MIEHNPTTIYGTTIVTVRKDGKVVIAGDGQVSLGNTVMKGNARKVRRIGKGNVIAGFAGATADAFTLLERLEAKLEQYPDQLMRASVELTKDWRTDRYLRKLEAMMLVADSKVTLALTGTGDVLEPEQGVMAIGSGGNYALAAARALIETDKSAEEIARKAMNIAADICIYTNHNIIVESLDAQ.

Thr-12 is a catalytic residue. Residues Ala-166, Cys-169, and Thr-172 each coordinate Na(+).

Belongs to the peptidase T1B family. HslV subfamily. As to quaternary structure, a double ring-shaped homohexamer of HslV is capped on each side by a ring-shaped HslU homohexamer. The assembly of the HslU/HslV complex is dependent on binding of ATP.

The protein resides in the cytoplasm. The enzyme catalyses ATP-dependent cleavage of peptide bonds with broad specificity.. With respect to regulation, allosterically activated by HslU binding. In terms of biological role, protease subunit of a proteasome-like degradation complex believed to be a general protein degrading machinery. This is ATP-dependent protease subunit HslV from Brucella melitensis biotype 1 (strain ATCC 23456 / CCUG 17765 / NCTC 10094 / 16M).